A 36-amino-acid chain; its full sequence is DSLSEDNWKFVVSSSCETILEILDIGGCAKGVAEYT.

Belongs to the phospholipase A2 family. Group III subfamily. In terms of assembly, heterodimer composed of a small subunit and a large subunit; disulfid-linked. Ca(2+) is required as a cofactor. As to expression, expressed by the venom gland.

The protein resides in the secreted. The catalysed reaction is a 1,2-diacyl-sn-glycero-3-phosphocholine + H2O = a 1-acyl-sn-glycero-3-phosphocholine + a fatty acid + H(+). Scorpion venom phospholipase A2 (PLA2) that impacts angiogenesis in vitro and in vivo without showing any cytotoxic or apoptotic signs. The antiangiogenic effect is independent from the catalytic activity and seems to be held by its small subunit. PLA2 catalyzes the calcium-dependent hydrolysis of the 2-acyl groups in 3-sn-phosphoglycerides. The protein is Phospholipase A2 hemilipin-2 of Hemiscorpius lepturus (Scorpion).